The following is a 48-amino-acid chain: Small ribosomal subunit protein uS14 (48 aa).

Cys13, Cys16, Cys31, and Cys34 together coordinate Zn(2+).

Belongs to the universal ribosomal protein uS14 family. Zinc-binding uS14 subfamily. Part of the 30S ribosomal subunit. Zn(2+) is required as a cofactor.

Binds 16S rRNA, required for the assembly of 30S particles. This chain is Small ribosomal subunit protein uS14, found in Methanopyrus kandleri (strain AV19 / DSM 6324 / JCM 9639 / NBRC 100938).